The following is a 385-amino-acid chain: Succinate--CoA ligase [ADP-forming] subunit beta (385 aa).

The ATP-grasp domain occupies 9–244 (KEILRKYGVP…QDEEDPLETR (236 aa)). ATP contacts are provided by residues K46, 53–55 (GRG), E99, C102, and E107. The Mg(2+) site is built by N199 and D213. Substrate-binding positions include N264 and 321-323 (GIM).

This sequence belongs to the succinate/malate CoA ligase beta subunit family. As to quaternary structure, heterotetramer of two alpha and two beta subunits. Mg(2+) is required as a cofactor.

It catalyses the reaction succinate + ATP + CoA = succinyl-CoA + ADP + phosphate. It carries out the reaction GTP + succinate + CoA = succinyl-CoA + GDP + phosphate. Its pathway is carbohydrate metabolism; tricarboxylic acid cycle; succinate from succinyl-CoA (ligase route): step 1/1. In terms of biological role, succinyl-CoA synthetase functions in the citric acid cycle (TCA), coupling the hydrolysis of succinyl-CoA to the synthesis of either ATP or GTP and thus represents the only step of substrate-level phosphorylation in the TCA. The beta subunit provides nucleotide specificity of the enzyme and binds the substrate succinate, while the binding sites for coenzyme A and phosphate are found in the alpha subunit. The chain is Succinate--CoA ligase [ADP-forming] subunit beta from Rickettsia bellii (strain RML369-C).